We begin with the raw amino-acid sequence, 330 residues long: GTP 3',8-cyclase (330 aa).

One can recognise a Radical SAM core domain in the interval 9-225 (RFGRTVNYVR…IRRHHELIPA (217 aa)). R18 provides a ligand contact to GTP. [4Fe-4S] cluster-binding residues include C25 and C29. Y31 is a binding site for S-adenosyl-L-methionine. C32 is a [4Fe-4S] cluster binding site. GTP is bound at residue R67. Position 71 (G71) interacts with S-adenosyl-L-methionine. Residue T97 coordinates GTP. S-adenosyl-L-methionine is bound at residue S121. K158 is a binding site for GTP. Residue M192 coordinates S-adenosyl-L-methionine. [4Fe-4S] cluster contacts are provided by C256 and C259. 261–263 (RVR) contributes to the GTP binding site. C273 is a [4Fe-4S] cluster binding site.

The protein belongs to the radical SAM superfamily. MoaA family. Monomer and homodimer. The cofactor is [4Fe-4S] cluster.

It catalyses the reaction GTP + AH2 + S-adenosyl-L-methionine = (8S)-3',8-cyclo-7,8-dihydroguanosine 5'-triphosphate + 5'-deoxyadenosine + L-methionine + A + H(+). It functions in the pathway cofactor biosynthesis; molybdopterin biosynthesis. Catalyzes the cyclization of GTP to (8S)-3',8-cyclo-7,8-dihydroguanosine 5'-triphosphate. This is GTP 3',8-cyclase from Marinobacter nauticus (strain ATCC 700491 / DSM 11845 / VT8) (Marinobacter aquaeolei).